The chain runs to 266 residues: rRNA adenine N-6-methyltransferase (266 aa).

S-adenosyl-L-methionine-binding residues include H14, T16, G41, E62, D87, and N103.

It belongs to the class I-like SAM-binding methyltransferase superfamily. rRNA adenine N(6)-methyltransferase family.

In terms of biological role, involved in erythromycin resistance. This chain is rRNA adenine N-6-methyltransferase (ermF), found in Bacteroides fragilis.